The following is a 147-amino-acid chain: Hemoglobin subunit beta (147 aa).

Position 2 is an N-acetylvaline (V2). Residues 3 to 147 form the Globin domain; sequence HLADDEKAAV…VSTALAHKYH (145 aa). Position 45 is a phosphoserine (S45). At K60 the chain carries N6-acetyllysine. Heme b is bound at residue H64. Position 83 is an N6-acetyllysine (K83). A heme b-binding site is contributed by H93. C94 is modified (S-nitrosocysteine). Residue K145 is modified to N6-acetyllysine.

It belongs to the globin family. In terms of assembly, heterotetramer of two alpha chains and two beta chains. As to expression, red blood cells.

Its function is as follows. Involved in oxygen transport from the lung to the various peripheral tissues. In Bradypus tridactylus (Pale-throated three-toed sloth), this protein is Hemoglobin subunit beta (HBB).